Consider the following 1356-residue polypeptide: Kinesin-like protein KIF24 (1356 aa).

Residues 1 to 64 (MASWLYECLC…FQLIKIIKIM (64 aa)) form the SAM domain. A disordered region spans residues 93 to 119 (GPRRQLHFDSPSASKDKMANNETGSLS). S102 carries the phosphoserine modification. A Kinesin motor domain is found at 218–541 (KIRVCVRKRP…LRYADRVKEL (324 aa)). An ATP-binding site is contributed by 308-315 (GQTGAGKT). Residue S473 is modified to Phosphoserine. Residues 473–702 (SLLALKECIR…PTRGKKVQPV (230 aa)) form an interaction with MPHOSPH9 region. The segment covering 552–571 (TSQNQTSANASPKRIQSSPV) has biased composition (polar residues). Disordered stretches follow at residues 552-581 (TSQNQTSANASPKRIQSSPVTLPGDKCSPK), 597-664 (PTKV…LCSE), 788-840 (EGRL…STAL), 897-947 (RGAL…HQKP), and 964-998 (VPEQAEGSLSSPSPENGLSFPLSHVAVSGSPDQRD). Position 579 is a phosphoserine (S579). Phosphothreonine; by NEK2 is present on T615. S616 is subject to Phosphoserine; by NEK2. 3 positions are modified to phosphoserine: S640, S817, and S820. A compositionally biased stretch (basic residues) spans 640-653 (SPRKGTTRSGHSIK). Over residues 810–821 (QAEDLDDSDFSE) the composition is skewed to acidic residues. Residues 830–840 (QPAMKQGSTAL) show a composition bias toward polar residues. The span at 970–979 (GSLSSPSPEN) shows a compositional bias: polar residues. Residue S1008 is modified to Phosphoserine. The disordered stretch occupies residues 1109-1140 (LSSSPPDNRPSGDLPALSPSPIHQHSPDKLPG).

It belongs to the TRAFAC class myosin-kinesin ATPase superfamily. Kinesin family. In terms of assembly, interacts with CCP110, CEP97, TALPID3. Interacts with MPHOSPH9. As to expression, expressed in brain, spinal cord, and small intestine.

Its subcellular location is the cytoplasm. It localises to the cytoskeleton. The protein localises to the microtubule organizing center. The protein resides in the centrosome. It is found in the centriole. Functionally, microtubule-dependent motor protein that acts as a negative regulator of ciliogenesis by mediating recruitment of CCP110 to mother centriole in cycling cells, leading to restrict nucleation of cilia at centrioles. Mediates depolymerization of microtubules of centriolar origin, possibly to suppress aberrant cilia formation. Following activation by NEK2 involved in disassembly of primary cilium during G2/M phase but does not disassemble fully formed ciliary axonemes. As cilium assembly and disassembly is proposed to coexist in a dynamic equilibrium may suppress nascent cilium assembly and, potentially, ciliar re-assembly in cells that have already disassembled their cilia ensuring the completion of cilium removal in the later stages of the cell cycle. Plays an important role in recruiting MPHOSPH9, a negative regulator of cilia formation to the distal end of mother centriole. This is Kinesin-like protein KIF24 (Kif24) from Mus musculus (Mouse).